The chain runs to 66 residues: Large ribosomal subunit protein bL28 (66 aa).

Residues methionine 1–arginine 26 are disordered. Polar residues predominate over residues phenylalanine 13–arginine 25.

The protein belongs to the bacterial ribosomal protein bL28 family.

This chain is Large ribosomal subunit protein bL28, found in Leuconostoc mesenteroides subsp. mesenteroides (strain ATCC 8293 / DSM 20343 / BCRC 11652 / CCM 1803 / JCM 6124 / NCDO 523 / NBRC 100496 / NCIMB 8023 / NCTC 12954 / NRRL B-1118 / 37Y).